The sequence spans 232 residues: 2,3,4,5-tetrahydropyridine-2,6-dicarboxylate N-acetyltransferase (232 aa).

It belongs to the transferase hexapeptide repeat family. DapH subfamily.

The catalysed reaction is (S)-2,3,4,5-tetrahydrodipicolinate + acetyl-CoA + H2O = L-2-acetamido-6-oxoheptanedioate + CoA. Its pathway is amino-acid biosynthesis; L-lysine biosynthesis via DAP pathway; LL-2,6-diaminopimelate from (S)-tetrahydrodipicolinate (acetylase route): step 1/3. Catalyzes the transfer of an acetyl group from acetyl-CoA to tetrahydrodipicolinate. The sequence is that of 2,3,4,5-tetrahydropyridine-2,6-dicarboxylate N-acetyltransferase from Streptococcus mutans serotype c (strain ATCC 700610 / UA159).